A 364-amino-acid polypeptide reads, in one-letter code: Fructose-bisphosphate aldolase, non-muscle type (364 aa).

Residues arginine 56 and lysine 147 each coordinate substrate. Lysine 230 functions as the Schiff-base intermediate with dihydroxyacetone-P in the catalytic mechanism.

Belongs to the class I fructose-bisphosphate aldolase family. Homotetramer. As to expression, expressed mainly in the liver and also in brain and other tissues, except for the heart muscle.

It carries out the reaction beta-D-fructose 1,6-bisphosphate = D-glyceraldehyde 3-phosphate + dihydroxyacetone phosphate. The protein operates within carbohydrate degradation; glycolysis; D-glyceraldehyde 3-phosphate and glycerone phosphate from D-glucose: step 4/4. The polypeptide is Fructose-bisphosphate aldolase, non-muscle type (Lethenteron camtschaticum (Japanese lamprey)).